Consider the following 287-residue polypeptide: 4-diphosphocytidyl-2-C-methyl-D-erythritol kinase (287 aa).

K22 is a catalytic residue. ATP is bound at residue 102–112; the sequence is PAAAGIGGGSS. The active site involves D139.

The protein belongs to the GHMP kinase family. IspE subfamily.

The catalysed reaction is 4-CDP-2-C-methyl-D-erythritol + ATP = 4-CDP-2-C-methyl-D-erythritol 2-phosphate + ADP + H(+). It participates in isoprenoid biosynthesis; isopentenyl diphosphate biosynthesis via DXP pathway; isopentenyl diphosphate from 1-deoxy-D-xylulose 5-phosphate: step 3/6. In terms of biological role, catalyzes the phosphorylation of the position 2 hydroxy group of 4-diphosphocytidyl-2C-methyl-D-erythritol. This Dinoroseobacter shibae (strain DSM 16493 / NCIMB 14021 / DFL 12) protein is 4-diphosphocytidyl-2-C-methyl-D-erythritol kinase.